A 194-amino-acid chain; its full sequence is Small ribosomal subunit protein uS4 (194 aa).

An N6-acetyllysine modification is found at Lys66. Lys93 is covalently cross-linked (Glycyl lysine isopeptide (Lys-Gly) (interchain with G-Cter in SUMO2)). The region spanning 108-182 (RRLQTQVFKL…VKRKNAKKGQ (75 aa)) is the S4 RNA-binding domain. The residue at position 116 (Lys116) is an N6-acetyllysine. Residue Lys139 forms a Glycyl lysine isopeptide (Lys-Gly) (interchain with G-Cter in SUMO2) linkage. Ser153 bears the Phosphoserine mark. The residue at position 155 (Lys155) is an N6-acetyllysine. A disordered region spans residues 162–194 (RSPYGGGRPGRVKRKNAKKGQGGAGAGDDEEED). Ser163 carries the phosphoserine modification.

This sequence belongs to the universal ribosomal protein uS4 family. As to quaternary structure, component of the small ribosomal subunit. Part of the small subunit (SSU) processome, composed of more than 70 proteins and the RNA chaperone small nucleolar RNA (snoRNA) U3.

It is found in the cytoplasm. The protein localises to the nucleus. Its subcellular location is the nucleolus. Its function is as follows. Component of the small ribosomal subunit. The ribosome is a large ribonucleoprotein complex responsible for the synthesis of proteins in the cell. Part of the small subunit (SSU) processome, first precursor of the small eukaryotic ribosomal subunit. During the assembly of the SSU processome in the nucleolus, many ribosome biogenesis factors, an RNA chaperone and ribosomal proteins associate with the nascent pre-rRNA and work in concert to generate RNA folding, modifications, rearrangements and cleavage as well as targeted degradation of pre-ribosomal RNA by the RNA exosome. The chain is Small ribosomal subunit protein uS4 (RPS9) from Papio anubis (Olive baboon).